The following is a 180-amino-acid chain: Stathmin-3 (180 aa).

Residues Cys-22 and Cys-24 are each lipidated (S-palmitoyl cysteine). The SLD domain maps to 38 to 180 (GDMEVKQLDK…NKEQREEMSG (143 aa)). Phosphoserine is present on residues Ser-50, Ser-60, Ser-65, Ser-68, Ser-72, Ser-73, and Ser-81. Positions 60–74 (SPSDLSPESPVLSSP) are enriched in low complexity. The disordered stretch occupies residues 60 to 81 (SPSDLSPESPVLSSPPKRKDAS). Residues 75–179 (PKRKDASLEE…RNKEQREEMS (105 aa)) are a coiled coil.

The protein belongs to the stathmin family. Interacts with STAT3. Interacts with CLU (secreted form); this interaction may act as an important modulator during neuronal differentiation. Post-translationally, N-terminal palmitoylation promotes specific anchoring to the cytosolic leaflet of Golgi membranes and subsequent vesicular trafficking along dendrites and axons. Neuronal Stathmins are substrates for palmitoyltransferases ZDHHC3, ZDHHC7 and ZDHHC15. Neuron specific.

The protein localises to the golgi apparatus. It localises to the cell projection. Its subcellular location is the growth cone. It is found in the axon. The protein resides in the cytoplasm. The protein localises to the cytosol. Exhibits microtubule-destabilizing activity, which is antagonized by STAT3. The polypeptide is Stathmin-3 (Stmn3) (Mus musculus (Mouse)).